The following is a 186-amino-acid chain: ATP synthase subunit delta (186 aa).

This sequence belongs to the ATPase delta chain family. F-type ATPases have 2 components, F(1) - the catalytic core - and F(0) - the membrane proton channel. F(1) has five subunits: alpha(3), beta(3), gamma(1), delta(1), epsilon(1). F(0) has three main subunits: a(1), b(2) and c(10-14). The alpha and beta chains form an alternating ring which encloses part of the gamma chain. F(1) is attached to F(0) by a central stalk formed by the gamma and epsilon chains, while a peripheral stalk is formed by the delta and b chains.

It localises to the cell inner membrane. F(1)F(0) ATP synthase produces ATP from ADP in the presence of a proton or sodium gradient. F-type ATPases consist of two structural domains, F(1) containing the extramembraneous catalytic core and F(0) containing the membrane proton channel, linked together by a central stalk and a peripheral stalk. During catalysis, ATP synthesis in the catalytic domain of F(1) is coupled via a rotary mechanism of the central stalk subunits to proton translocation. Its function is as follows. This protein is part of the stalk that links CF(0) to CF(1). It either transmits conformational changes from CF(0) to CF(1) or is implicated in proton conduction. The chain is ATP synthase subunit delta from Brucella melitensis biotype 2 (strain ATCC 23457).